A 331-amino-acid chain; its full sequence is MLTLTPVLTVSYEAKISFLFLSVVEFAVGIMANAFIVLVNFWDMVKKQPLNNCDIALLCLSITRLFLQGLLLLDAIQLACFQQMKDPLSHNYQAILTLWMSANQVSLWLAACLSLLYCAKIVRFSHTFPLHLASWVSRRFLQMLLVALLFSGVCTALCLWDFFSRSHTVVTSMLHMNNTEFNLQIEKLNFFYSFVFCNVGSVPPSLVFLISSGVLVISLGNHMRTMKSQTRGSRDPSLEAHVRAIIFLVSFLCFYVVSFCAALISIPLLVLWHNKGGVMVCIGMMAACPSGHAAILISGNAKLKKVIVTILFWFQSRQKVRRVHKVLPRIL.

Residues 1–17 are Extracellular-facing; the sequence is MLTLTPVLTVSYEAKIS. A helical transmembrane segment spans residues 18 to 38; that stretch reads FLFLSVVEFAVGIMANAFIVL. The Cytoplasmic segment spans residues 39-54; it reads VNFWDMVKKQPLNNCD. A helical transmembrane segment spans residues 55 to 75; the sequence is IALLCLSITRLFLQGLLLLDA. The Extracellular portion of the chain corresponds to 76–94; the sequence is IQLACFQQMKDPLSHNYQA. A helical transmembrane segment spans residues 95 to 115; that stretch reads ILTLWMSANQVSLWLAACLSL. The Cytoplasmic segment spans residues 116–142; it reads LYCAKIVRFSHTFPLHLASWVSRRFLQ. The helical transmembrane segment at 143-163 threads the bilayer; that stretch reads MLLVALLFSGVCTALCLWDFF. The Extracellular portion of the chain corresponds to 164-198; sequence SRSHTVVTSMLHMNNTEFNLQIEKLNFFYSFVFCN. Asn-177 carries N-linked (GlcNAc...) asparagine glycosylation. Residues 199–219 form a helical membrane-spanning segment; sequence VGSVPPSLVFLISSGVLVISL. Over 220-243 the chain is Cytoplasmic; it reads GNHMRTMKSQTRGSRDPSLEAHVR. Residues 244-264 traverse the membrane as a helical segment; that stretch reads AIIFLVSFLCFYVVSFCAALI. Residues 265 to 276 are Extracellular-facing; it reads SIPLLVLWHNKG. The helical transmembrane segment at 277 to 297 threads the bilayer; sequence GVMVCIGMMAACPSGHAAILI. Topologically, residues 298–331 are cytoplasmic; that stretch reads SGNAKLKKVIVTILFWFQSRQKVRRVHKVLPRIL.

The protein belongs to the G-protein coupled receptor T2R family. Expressed in tongue, stomach and duodenum.

It is found in the membrane. Putative taste receptor which may play a role in the perception of bitterness. This is Taste receptor type 2 member 38 (Tas2r38) from Rattus norvegicus (Rat).